The primary structure comprises 293 residues: Eukaryotic translation initiation factor 3 subunit G (293 aa).

2 disordered regions span residues 1–32 and 163–206; these read MPSIEFDDSKPSWADQVEEEGDEGSLPSPKET and STGE…QPNR. The span at 194–206 shows a compositional bias: basic and acidic residues; it reads GGTRRGESMQPNR. Positions 212-290 constitute an RRM domain; sequence ATIRVTNLSE…LILNVEWAKP (79 aa).

Belongs to the eIF-3 subunit G family. In terms of assembly, component of the eukaryotic translation initiation factor 3 (eIF-3) complex, which is composed of 13 subunits: eif3a, eif3b, eif3c, eif3d, eif3e, eif3f, eif3g, eif3h, eif3i, eif3j, eif3k, eif3l and eif3m.

It is found in the cytoplasm. RNA-binding component of the eukaryotic translation initiation factor 3 (eIF-3) complex, which is involved in protein synthesis of a specialized repertoire of mRNAs and, together with other initiation factors, stimulates binding of mRNA and methionyl-tRNAi to the 40S ribosome. The eIF-3 complex specifically targets and initiates translation of a subset of mRNAs involved in cell proliferation. This subunit can bind 18S rRNA. This is Eukaryotic translation initiation factor 3 subunit G (eif3g) from Danio rerio (Zebrafish).